An 876-amino-acid polypeptide reads, in one-letter code: AP-5 complex subunit beta-1 (876 aa).

As to quaternary structure, probably part of the adaptor protein complex 5 (AP-5), a tetramer composed of AP5B1, AP5M1, AP5S1 and AP5Z1. Interacts with ZFYVE26 and SPG11.

Its function is as follows. As part of AP-5, a probable fifth adaptor protein complex it may be involved in endosomal transport. The chain is AP-5 complex subunit beta-1 (Ap5b1) from Mus musculus (Mouse).